The chain runs to 714 residues: VIN3-like protein 2 (714 aa).

A PHD-type zinc finger spans residues 164–232 (RCSCCICRKY…CFYCVSCGKA (69 aa)). The Nuclear localization signal motif lies at 239-246 (WKKQLTIA). A Fibronectin type-III domain is found at 366–463 (GSTKIRFEDV…INVLTRSAEE (98 aa)). The span at 478 to 498 (LTNCSTLSSNPSSVEAESNND) shows a compositional bias: polar residues. A disordered region spans residues 478–530 (LTNCSTLSSNPSSVEAESNNDYIVPKKPSSKNEDNNSPSVDESAAKRMKRTTD). Residues 602–714 (SMKDNCNNGD…PSGFCMKLWH (113 aa)) are VIN3-Interacting Domain (VID).

Self-interacts. Interacts with VIN3 and VIL1. Component of the plant homeodomain / polycomb repressive complex 2 (PHD-PRC2) large complex during prolonged cold, composed of core PRC2 components (VRN2, EZA1, FIE and MSI1), and three related PHD finger proteins (VIL1, VIL2 and VIN3) that mediates histone H3 trimethylation on 'Lys-27' (H3K27me3).

It localises to the nucleus. Its function is as follows. Maybe involved in both the vernalization and photoperiod pathways by regulating gene expression. Binds preferentially to dimethylated histone H3 'Lys-9' (H3K9me2). Promotes flowering in non-inductive photoperiods (e.g. short days) through the maintenance of the epigenetically repressed state of MAF5 via H3K9me2 and plant homeodomain / polycomb repressive complex 2 (PHD-PRC2)-dependent H3K27me3. In Arabidopsis thaliana (Mouse-ear cress), this protein is VIN3-like protein 2 (VIL2).